An 849-amino-acid polypeptide reads, in one-letter code: MARNSIKKSPVVKKKDTPIVRKRKPIQQEAEEDSNDEESEDELNVEGLIDASDDEDEEEEQEQEEQPQEEENNSDDDDDDDDDDDDNNSEADSEEELNQLLGEEEEEDPSDYNSDEFSDEPKDDDLSRINIKSLSVSDPSIQKNSISKFSDGSIRILKPEIEPKYDSDDSDAENFNTIGNIPISAYDEMPHIGYDINGKRIMRPAKGSALDQLLESIDLPEGWTGLLDQNTGTSLKLTDEELELIRKIQQQENTDENINPYEPLIDWFTKDEEIMPVTAVPEPKRRFVPSKHEAKRVMKIVKAIREGRIIPPNKVKQQLTEEEEEDQFNFDLWQDEIEISDHIMNLRAPKLPPPTNEESYNPPEEYLLTEEEKSKWLQESPIDRERNFLPQKYNSLRQVPGYQDSVRERFERSLDLYLAPRVRHNKLNIDPDSLIPDLPSPKDLRPFPIRCSTIYEGHTGKIRTISIDPQGLWLATGSDDGSVRIWEILTGRQVYKIQLINKEINNEDHIECLEWNPDSSCGILAVCVGENIYLIVPPIFGFDIENSGKLRIESGWGYDTFGNKKKDLKISSQKEEDNKESDNEDEDEEEDNDDDDDDDEPETSSTVEPKKEVAKWYPPNTEQASMGISAIIQCRKTIKKLSWHRKGDYFVTVSPDSKNTAVLIHQISKHLSQSPFKKSKGIIMDAKFHPFKPQLFVASQRQIKIYDLAQQVLLKKLMPGVRLLSTIDIHPRGDNLIAGSYDKRVLWHDLDLSATPYKTLRYHEKAVRSIKFHKGNLPLFASASDDGNIHIFHGTVYDDLMTNPLLVPLKKLNGHKIINQIGILDLIWHPKEPWLFSAGADGTARLWTT.

Positions 1–130 are disordered; that stretch reads MARNSIKKSP…PKDDDLSRIN (130 aa). Acidic residues-rich tracts occupy residues 29–44 and 51–123; these read EAEE…DELN and ASDD…EPKD. The interval 286–405 is required for interaction with NOP7; the sequence is RFVPSKHEAK…LRQVPGYQDS (120 aa). The tract at residues 405–441 is required for interaction with YTM1; the sequence is SVRERFERSLDLYLAPRVRHNKLNIDPDSLIPDLPSP. 2 WD repeats span residues 457–496 and 505–545; these read GHTG…QVYK and NNED…FDIE. The segment covering 569 to 581 has biased composition (basic and acidic residues); the sequence is KISSQKEEDNKES. The tract at residues 569–619 is disordered; it reads KISSQKEEDNKESDNEDEDEEEDNDDDDDDDEPETSSTVEPKKEVAKWYPP. Residues 582–602 are compositionally biased toward acidic residues; it reads DNEDEDEEEDNDDDDDDDEPE. WD repeat units lie at residues 633–675, 678–716, 719–758, 762–802, and 818–849; these read QCRK…SQSP, KSKG…LLKK, PGVR…TPYK, YHEK…DLMT, and INQI…LWTT.

This sequence belongs to the WD repeat BOP1/ERB1 family. In terms of assembly, component of the NOP7 complex, composed of ERB1, NOP7 and YTM1. The complex is held together by ERB1, which interacts with NOP7 via its N-terminal domain and with YTM1 via a high-affinity interaction between the seven-bladed beta-propeller domains of the 2 proteins. The NOP7 complex associates with the 66S pre-ribosome.

The protein resides in the nucleus. Its subcellular location is the nucleolus. It is found in the nucleoplasm. Functionally, component of the NOP7 complex, which is required for maturation of the 25S and 5.8S ribosomal RNAs and formation of the 60S ribosome. This Candida albicans (strain SC5314 / ATCC MYA-2876) (Yeast) protein is Ribosome biogenesis protein ERB1.